Consider the following 162-residue polypeptide: Sorting nexin-3 (162 aa).

The tract at residues 1 to 23 is disordered; the sequence is MPREFKSFGSTEKSLLSKGHGEP. Positions 38 to 161 constitute a PX domain; that stretch reads IEVHNPKTHI…VRFIEAEKFV (124 aa). The a 1,2-diacyl-sn-glycero-3-phospho-(1D-myo-inositol-3-phosphate) site is built by R81, S83, K112, and R127.

It belongs to the sorting nexin family. In terms of assembly, monomer. Interacts with RBD2, YIF1, YIP1 and YIP5.

The protein resides in the cytoplasm. It localises to the golgi apparatus membrane. It is found in the prevacuolar compartment membrane. Its function is as follows. Required for retention of late Golgi membrane proteins. Component of the retrieval machinery that functions by direct interaction with the cytosolic tails of certain TGN membrane proteins during the sorting/budding process at the prevacuolar compartment. Binds phosphatidylinositol 3-phosphate (PtdIns(P3)). The sequence is that of Sorting nexin-3 (SNX3) from Saccharomyces cerevisiae (strain ATCC 204508 / S288c) (Baker's yeast).